A 393-amino-acid polypeptide reads, in one-letter code: 26S proteasome regulatory subunit 10B (393 aa).

Gly-178–Thr-185 contributes to the ATP binding site.

The protein belongs to the AAA ATPase family.

The protein resides in the cytoplasm. It is found in the nucleus. The 26S proteasome is involved in the ATP-dependent degradation of ubiquitinated proteins. The regulatory (or ATPase) complex confers ATP dependency and substrate specificity to the 26S complex. The sequence is that of 26S proteasome regulatory subunit 10B (psmC6) from Dictyostelium discoideum (Social amoeba).